A 566-amino-acid polypeptide reads, in one-letter code: Chondroitin sulfate proteoglycan 5 (566 aa).

A signal peptide spans 1 to 30 (MGRAGGGGPDWGPPPVLLLLGVTLVLTAGA). Over 31–423 (VPARETGSAI…SIITDFQVMC (393 aa)) the chain is Extracellular. An O-linked (Xyl...) (chondroitin sulfate) serine glycan is attached at Ser38. Positions 56-93 (ANDTREEAGLPAAGEDETSWTERGSEMAAVGPGVGPEE) are disordered. A glycan (N-linked (GlcNAc...) asparagine) is linked at Asn57. O-linked (GalNAc...) threonine glycosylation occurs at Thr76. O-linked (Xyl...) (chondroitin sulfate) serine glycosylation is present at Ser123. The O-linked (GalNAc...) threonine glycan is linked to Thr132. Disordered stretches follow at residues 137 to 173 (DEAL…GPEL), 218 to 249 (DSEG…TPSW), and 263 to 327 (ESDF…PPQH). O-linked (GalNAc...) serine glycosylation is present at Ser143. O-linked (GalNAc...) threonine glycans are attached at residues Thr144, Thr153, and Thr155. O-linked (GalNAc...) serine glycans are attached at residues Ser156 and Ser160. A compositionally biased stretch (basic and acidic residues) spans 163-173 (VHDKPSVGPEL). A glycan (O-linked (GalNAc...) threonine) is linked at Thr235. The tract at residues 265 to 301 (DFYPTTSFYDDLEEEEEEEEDKDTVGGGDLEDENDLL) is interaction with TNC and TNR. Residues 274–286 (DDLEEEEEEEEDK) are compositionally biased toward acidic residues. Asn355 and Asn367 each carry an N-linked (GlcNAc...) asparagine glycan. The region spanning 371–413 (RSVCDLFPSYCHNGGQCYLVENIGAFCRCNTQDYIWHKGMRCE) is the EGF-like domain. Intrachain disulfides connect Cys374–Cys387, Cys381–Cys397, and Cys399–Cys412. Phosphoserine occurs at positions 394 and 396. Phosphothreonine is present on Cys397. The helical transmembrane segment at 424–444 (VAVGSAALVLLLLFMMTVFFA) threads the bilayer. Residues 442 to 460 (FFAKKLYLLKTENTKLRRT) are interaction with GOPC. At 445–566 (KKLYLLKTEN…GVNCLQNNLT (122 aa)) the chain is on the cytoplasmic side. Phosphoserine is present on residues Ser467, Ser475, and Ser477. Thr478 carries the phosphothreonine modification. Phosphoserine is present on residues Ser483 and Ser543. A disordered region spans residues 531–566 (KEEESFNIQNSMSPKLEGGKGDQDDLGVNCLQNNLT).

Binds TNR and probably TNC. Interacts with ERBB3 and GOPC. Interacts with MDK; this interaction is independent of the presence of chondroitin sulfate chains and promotes elongation of oligodendroglial precursor-like cells. In terms of processing, N-glycosylated. Post-translationally, O-glycosylated; contains chondroitin sulfate glycans. Part-time proteoglycan, expressed in part as a proteoglycan exhibiting chondroitin sulfate glycans and in part as a non-proteoglycan form. The relative amount of both forms depends on tissues and tissue maturation. In the cerebellum the 2 forms coexist while in the cerebrum the proteoglycan form is predominant. Phosphorylated; in intracellular and extracellular parts. As to expression, expressed in olfactory bulb, hippocampus, brain stem, spinal cord, cerebrum and cerebellum. Expressed by Purkinje cells in the cerebellum (at protein level). Expressed in immature and mature cerebellum (isoform 1, isoform 2 and isoform 3).

It localises to the cell membrane. The protein resides in the synaptic cell membrane. Its subcellular location is the endoplasmic reticulum membrane. It is found in the golgi apparatus membrane. The protein localises to the cell surface. It localises to the secreted. May function as a growth and differentiation factor involved in neuritogenesis. May induce ERBB3 activation. This chain is Chondroitin sulfate proteoglycan 5 (Cspg5), found in Mus musculus (Mouse).